A 275-amino-acid chain; its full sequence is Adaptin ear-binding coat-associated protein 1 (275 aa).

A disordered region spans residues 170–191 (KGGASKPRTARGGGLSLLPPPP). R180 bears the Omega-N-methylarginine mark. A Phosphothreonine modification is found at T211. 2 consecutive short sequence motifs (WXXF motif) follow at residues 252–255 (WGDF) and 272–275 (WVQF). Residues 254-275 (DFSTASSSVPNQAPQPSNWVQF) are disordered. Positions 256–275 (STASSSVPNQAPQPSNWVQF) are enriched in polar residues.

This sequence belongs to the NECAP family. In terms of assembly, interacts with AP1G1 and AP2A1 components of the adapter protein complexes AP-1 and AP-2. Interacts with the GAE domain proteins GGA1, GGA2 and GGA3.

The protein resides in the cytoplasmic vesicle. It localises to the clathrin-coated vesicle membrane. The protein localises to the cell membrane. Functionally, involved in endocytosis. The sequence is that of Adaptin ear-binding coat-associated protein 1 (NECAP1) from Homo sapiens (Human).